We begin with the raw amino-acid sequence, 134 residues long: ATP synthase epsilon chain, plastid (134 aa).

It belongs to the ATPase epsilon chain family. F-type ATPases have 2 components, CF(1) - the catalytic core - and CF(0) - the membrane proton channel. CF(1) has five subunits: alpha(3), beta(3), gamma(1), delta(1), epsilon(1). CF(0) has three main subunits: a, b and c.

It localises to the plastid membrane. Produces ATP from ADP in the presence of a proton gradient across the membrane. This Prototheca wickerhamii protein is ATP synthase epsilon chain, plastid.